Reading from the N-terminus, the 338-residue chain is Solute-binding protein Rfer_1840 (338 aa).

Residues 1–25 form the signal peptide; that stretch reads MQRRQLLQSMGGLAASTMPFSLAFA. Residues arginine 47, tyrosine 100, arginine 175, serine 197, 214 to 218, and glutamate 244 contribute to the malonate site; that span reads TSSTS.

It belongs to the bacterial solute-binding protein 7 family. In terms of assembly, the complex is comprised of an extracytoplasmic solute-binding protein and a heteromeric permease formed by two transmembrane proteins.

The protein localises to the periplasm. Its function is as follows. Solute-binding protein that binds malonate (in vitro). Probably part of a tripartite ATP-independent periplasmic (TRAP) transport system that mediates solute transport into the cytoplasm. This chain is Solute-binding protein Rfer_1840, found in Albidiferax ferrireducens (strain ATCC BAA-621 / DSM 15236 / T118) (Rhodoferax ferrireducens).